A 74-amino-acid chain; its full sequence is Dermaseptin-B3 (74 aa).

The N-terminal stretch at 1-22 (MAFLKKSVFLVLFLGLVSLSIC) is a signal peptide. The propeptide occupies 23–43 (EEEKREEENEEKQEDDEQSEE).

Expressed by the skin glands.

The protein resides in the secreted. In terms of biological role, possesses a potent antimicrobial activity against Gram-positive and Gram-negative bacteria. Probably acts by disturbing membrane functions with its amphipathic structure. In Phyllomedusa bicolor (Two-colored leaf frog), this protein is Dermaseptin-B3.